Here is a 490-residue protein sequence, read N- to C-terminus: Protein nucleotidyltransferase YdiU (490 aa).

Residues glycine 89, glycine 91, arginine 92, lysine 112, aspartate 124, glycine 125, arginine 175, and arginine 182 each coordinate ATP. The active-site Proton acceptor is the aspartate 251. Mg(2+) contacts are provided by asparagine 252 and aspartate 261. Aspartate 261 provides a ligand contact to ATP.

This sequence belongs to the SELO family. It depends on Mg(2+) as a cofactor. Requires Mn(2+) as cofactor.

It catalyses the reaction L-seryl-[protein] + ATP = 3-O-(5'-adenylyl)-L-seryl-[protein] + diphosphate. The catalysed reaction is L-threonyl-[protein] + ATP = 3-O-(5'-adenylyl)-L-threonyl-[protein] + diphosphate. The enzyme catalyses L-tyrosyl-[protein] + ATP = O-(5'-adenylyl)-L-tyrosyl-[protein] + diphosphate. It carries out the reaction L-histidyl-[protein] + UTP = N(tele)-(5'-uridylyl)-L-histidyl-[protein] + diphosphate. It catalyses the reaction L-seryl-[protein] + UTP = O-(5'-uridylyl)-L-seryl-[protein] + diphosphate. The catalysed reaction is L-tyrosyl-[protein] + UTP = O-(5'-uridylyl)-L-tyrosyl-[protein] + diphosphate. Nucleotidyltransferase involved in the post-translational modification of proteins. It can catalyze the addition of adenosine monophosphate (AMP) or uridine monophosphate (UMP) to a protein, resulting in modifications known as AMPylation and UMPylation. This Vibrio vulnificus (strain CMCP6) protein is Protein nucleotidyltransferase YdiU.